We begin with the raw amino-acid sequence, 483 residues long: MNKKIRVRYAPSPTGLLHIGNARTALFNYLFARHHGGDFIIRIEDTDRERHVEDGERSQLENLRWLGMDWDESPETHENYRQSERLPLYQKYIDQLLTEGKAYYSYKTPEELEADHAKQEAAGIAPHYINEYAGMSDDEKAAYIAERKAQNIEPVVRISVDEKAIYKWNDIVKGDIEFEGKNIGGDWVIQKRDGYPTYNFAVVVDDHDMQISHVIRGDDHIANTPKQLVVYDALGWEAPQFGHMTLIINSETGKKLSKRDTNTLQFIEDYRKKGYMSDAIFNFIALLGWNPGGEKEIFSREELIELFDEHRLSKSPAAFDQKKLDWLDNEYIKNADFAKVFELTKPFLVAANRFDERAEELVKLYQPQMKSADEIVELTDLFYGDFPELTDEAREMLAAETTPLALSTFRAKLAELPENDFTVENIFPLFKATQKETGVKGKMLWMPIRIAASGSMHGPELPETIALLGKEKVLAHLDAALNK.

A 'HIGH' region motif is present at residues 11–21 (PSPTGLLHIGN). The short motif at 255-259 (KLSKR) is the 'KMSKS' region element. Lys258 serves as a coordination point for ATP.

This sequence belongs to the class-I aminoacyl-tRNA synthetase family. Glutamate--tRNA ligase type 1 subfamily. As to quaternary structure, monomer.

It localises to the cytoplasm. It carries out the reaction tRNA(Glu) + L-glutamate + ATP = L-glutamyl-tRNA(Glu) + AMP + diphosphate. Catalyzes the attachment of glutamate to tRNA(Glu) in a two-step reaction: glutamate is first activated by ATP to form Glu-AMP and then transferred to the acceptor end of tRNA(Glu). The protein is Glutamate--tRNA ligase of Lactococcus lactis subsp. lactis (strain IL1403) (Streptococcus lactis).